The chain runs to 1155 residues: ATP-dependent helicase/deoxyribonuclease subunit B (1155 aa).

The UvrD-like helicase ATP-binding domain occupies 1–300; the sequence is MSLRFIVGRA…AHLEKYYFRH (300 aa). Residue 8–15 coordinates ATP; sequence GRAGSGKS. One can recognise a UvrD-like helicase C-terminal domain in the interval 280 to 590; sequence TPVRFQKDSA…VVGTLERSRN (311 aa). Residues Cys-792, Cys-1111, Cys-1114, and Cys-1120 each coordinate [4Fe-4S] cluster.

It belongs to the helicase family. AddB/RexB type 1 subfamily. In terms of assembly, heterodimer of AddA and AddB. Requires Mg(2+) as cofactor. [4Fe-4S] cluster is required as a cofactor.

The heterodimer acts as both an ATP-dependent DNA helicase and an ATP-dependent, dual-direction single-stranded exonuclease. Recognizes the chi site generating a DNA molecule suitable for the initiation of homologous recombination. The AddB subunit has 5' -&gt; 3' nuclease activity but not helicase activity. The protein is ATP-dependent helicase/deoxyribonuclease subunit B of Desulforamulus reducens (strain ATCC BAA-1160 / DSM 100696 / MI-1) (Desulfotomaculum reducens).